The following is a 433-amino-acid chain: Meiotically up-regulated gene 131 protein (433 aa).

The segment covering 401-412 (LSSQGREISNTL) has biased composition (polar residues). The interval 401-433 (LSSQGREISNTLSRKRGAKGSNPFEIENMMPHA) is disordered.

It belongs to the UPF0300 family.

The protein localises to the golgi apparatus. Its function is as follows. Has a role in meiosis. The chain is Meiotically up-regulated gene 131 protein (mug131) from Schizosaccharomyces pombe (strain 972 / ATCC 24843) (Fission yeast).